We begin with the raw amino-acid sequence, 305 residues long: Acetylglutamate kinase (305 aa).

Substrate contacts are provided by residues 78–79, R100, and N202; that span reads GG.

This sequence belongs to the acetylglutamate kinase family. ArgB subfamily.

It is found in the cytoplasm. The catalysed reaction is N-acetyl-L-glutamate + ATP = N-acetyl-L-glutamyl 5-phosphate + ADP. It functions in the pathway amino-acid biosynthesis; L-arginine biosynthesis; N(2)-acetyl-L-ornithine from L-glutamate: step 2/4. Functionally, catalyzes the ATP-dependent phosphorylation of N-acetyl-L-glutamate. The chain is Acetylglutamate kinase from Polaromonas sp. (strain JS666 / ATCC BAA-500).